Reading from the N-terminus, the 91-residue chain is MGRSLKKGPFIADSLLKKVEKQNTENDKSVIKTWSRSSTILPVMIGHTIAVHNGKAHIPVFITEQMIGHKLGEFAPTRTYRGHLRDKKGAR.

Belongs to the universal ribosomal protein uS19 family.

Its function is as follows. Protein S19 forms a complex with S13 that binds strongly to the 16S ribosomal RNA. This Prochlorococcus marinus (strain MIT 9515) protein is Small ribosomal subunit protein uS19.